We begin with the raw amino-acid sequence, 1647 residues long: Maestro heat-like repeat-containing protein family member 1 (1647 aa).

HEAT repeat units lie at residues 9–47 (SPVL…RQPN), 65–103 (QTHR…SEMT), 224–262 (SEFY…ILSV), 351–389 (RGYS…RLDV), 597–635 (DVTL…TIKN), 968–1006 (FDSI…IGFM), 1131–1168 (SLAN…DKNL), 1364–1400 (KELI…AGVE), 1403–1441 (NRYA…VADE), 1490–1528 (YEQI…LMRS), and 1612–1647 (NINS…LHHY).

Belongs to the MROH1 family. Homooligomer.

The protein resides in the lysosome membrane. In terms of biological role, lysosome fission factor. This chain is Maestro heat-like repeat-containing protein family member 1 (mroh1), found in Dictyostelium discoideum (Social amoeba).